The primary structure comprises 57 residues: Large ribosomal subunit protein bL32 (57 aa).

The interval 1–21 (MAVQQRRSSKHRRDKRRSHDA) is disordered. Residues 7-18 (RSSKHRRDKRRS) show a composition bias toward basic residues.

It belongs to the bacterial ribosomal protein bL32 family.

In Mycoplasma pneumoniae (strain ATCC 29342 / M129 / Subtype 1) (Mycoplasmoides pneumoniae), this protein is Large ribosomal subunit protein bL32 (rpmF).